Here is a 418-residue protein sequence, read N- to C-terminus: Ankyrin repeat domain-containing protein 61 (418 aa).

8 ANK repeats span residues 27 to 57 (ALHS…NQPL), 74 to 103 (QPIF…DPEV), 131 to 160 (TRIQ…QVNA), 166 to 195 (NKHS…QVNA), 199 to 228 (SSMT…NVNC), 233 to 272 (TGNT…QVNA), 276 to 305 (EGQT…NVNI), and 309 to 342 (NGES…PLRL).

This Rattus norvegicus (Rat) protein is Ankyrin repeat domain-containing protein 61 (Ankrd61).